Here is a 139-residue protein sequence, read N- to C-terminus: Peptide methionine sulfoxide reductase MsrB (139 aa).

In terms of domain architecture, MsrB spans 8-130 (EREWQRELSP…NSASLQLKTD (123 aa)). Residues Cys-47, Cys-50, Cys-96, and Cys-99 each contribute to the Zn(2+) site. The Nucleophile role is filled by Cys-119.

It belongs to the MsrB Met sulfoxide reductase family. It depends on Zn(2+) as a cofactor.

It carries out the reaction L-methionyl-[protein] + [thioredoxin]-disulfide + H2O = L-methionyl-(R)-S-oxide-[protein] + [thioredoxin]-dithiol. In Acinetobacter baylyi (strain ATCC 33305 / BD413 / ADP1), this protein is Peptide methionine sulfoxide reductase MsrB.